A 2334-amino-acid polypeptide reads, in one-letter code: MKKRKRRNFKRFIAAFLVLALMISLVPADVLAKSTEEENGNRIAADDPEETLQKEQTEEAVPFDPKDINKEGEITSERTENTKLYYEGDGVYKQEVYLDPIHTKETPDADWEDISPELKESTSKQVETENAILNSDFQKQMKNGLYATFEHNDHKVTYSLAEAKGPNKTSLTPKDTSADYKTDSNEIVYPDVFPNIDLQTFTFNENIKEDLVLHQYNGYNTFTFQLKTDLQAKEQEDGSIDFSDEKGKVVFSVPKPFMTDSKLDELSGEVERSDKVSYKLEKNEEGYLLHLTADENWLKDPERVYPVSIDPSTSLSVSSDTFVMSAYPTTNYSASSQKWDANLKAYVLKTGYYDKTTGTNYAFMKFNNLKPIQNMTVTKATLKTYVAHSYYGTKATGLWLDTVNSNYDNAKVTWNTKPASKNIGKADVHKGQWASYDVTAAVKSWNSGGANYGFKLHTNGNGKEYWKKLISSANSANKPYIEVTYTIPKGNTPTIKAYHNGDSTGYFDISWKKVEGAKGYKVWIYNGKEYQAISAGNVTSWSTKGKKIWPTSAEIASKRYKLHLDGKDGAELALDPSPVYKNSGGSYATSKNYWIGVSAIFDQGEGAMSAPAKPVIPNVGKAQAPSAKGYNNGNATGYFDLSWKAVSGATGYKVQVFNGKGFETLDLGNQTSWTTKGKKIWPTSAEIKAGKYALHLKDGSGAELPINPGPTYKNAGGDGAKRNYSFKIIAYNKDGEAIASPAATPALPDIARPKNVTGYLYTNTKSSQTGYVNLIWEKVQNAKGYKVNIYNGKEYQSFDVGDADHWTTQNKNIWPTSEEIKAGSYKLHTDGKGGELALDPSPVYNNANGNYKGKKNYSFTLVAYDANGETIPTAPFNPTFHEGAEFLGTEEYWSIIDIPSGQLNGATGNVIVNEEDLSIDGRGPGLGLSRTYNSLDSSDHLFGQGWYADAETSVISTDGGAMYIDEDATTHRFTKKADGTYQPPTGVYLELTETADQFILKTKDQTNAYFNKKGGKLQKVVDGHNNATVYTYNDKNQLTAITDASGRKLTFTYDENGHVTSITGPKNKKVTYSYENDLLKKVTDTDGTVTSYDYDSEGRLVKQYSANSTEAKPVFTEYQYSGHRLEKAINAKKETYVYSYDADKKTLLMTQPNGRKVQYGYNEAGNPIQVIDDAEGLKITTNTKYEGNNVVEDVDPNDVGTGKATESYQYDKDGNVTSVKDAYGTETYEYNKNNDVTKMKDTEGNVTDIAYDGLDAVSETDQSGKSSSAAVYDKYGNQIQSSKDLSASTNILKDGSFEAQKSGWNLTASKDSGKISVIADKSGVLSGSKALEVLSQSTSAGTDHGYSSATQTVELEPNTTYTLSGKIKTDLAKSRAYFNIDLRDKDQKRIQWIHNEYSALAGKNDWTKRQITFTTPANAGKAVVYMEVDHKDKDGKGKAWFDEVQLEKGEVSSSYNPVQNSSFTSATENWNVSGASVDSEEGFNDDVSLKAARTSASQAGSVTKQTVVLGQSANDKPVYLTLTGMSKASSVKFTDEKDYSLQANVTYADGSTGIYNAKFPSGTQEWNRAAVVIPKTKPINKVDISILFQKSATGTVWFDDIRLIEGSLLTKSTYDSNGNYVTKEEDELGYATSTDYDETGKKTSETDAKGEKTTYTYDQADQLTNMTLSNGTSILHSYDKEGNEVSKTIRAGADQTYKFEYDVMGKLVKTTDPLGNVLASEYDANSNLTKTISPNGNEVSLSYDGTDRVKSKSYNGTEKYIFTYDKNGNETSVVNKEQNTTKKRTFDNKNRLTELTDRGGSQTWTYPSDSDKLKTFSWIHGDQKGTNQFTYNKLDQMIEMKDSTSSYSFDYDENGNVQTFITGNGGGTSFSYDERNLVSSLHIGDKNGGDILTESYEYDANGNRTTINSSASGKVQYEYGKLNQLVKETHEDGTVIEYTYDGFGNRKTVTTIKDGSSKTVNASFNIMNQLTKVNDESISYDKNGNRTSDGKFTYTWDAEDNLTAVTKKGEDKPFATYKYDEKGNRIQKTVNGKVTNYFYDGDSLNVLYETDADNNVTKSYTYGDSGQLLSYTENGKKYFYHYNAHGDIIAISDSTGKTVAKYQYDAWGNPTKTEASDEVKDNRYRYAGYQYDEETGLYYLMARYYEPRNGVFLSLDPDPGSDGDSLDQNGYAYGNNNPVMNVDPDGHWVWLVVNAGFAAYDGYKAYKSGKGWKGAAWAAASNFGPGKIFKGASRAYKFTKKAVKITGHTRHGLNQSIGRNGGRGVNLRAKLNAVRSPKKVIKQPNGATKYVGKKATVVLNKRGKVITAYGSSRAKGSKHVFHTHGKGNKSKRRR.

A signal peptide (or 32) is located at residues 1-28 (MKKRKRRNFKRFIAAFLVLALMISLVPA). The disordered stretch occupies residues 36 to 59 (EEENGNRIAADDPEETLQKEQTEE). Tandem repeats lie at residues 504-605 (TGYF…DQGE), 636-736 (TGYF…KDGE), 769-869 (TGYV…ANGE), 1021-1040 (VDGH…QLTA), 1042-1061 (TDAS…HVTS), 1063-1082 (TGPK…LKKV), 1083-1102 (TDTD…RLVK), 1109-1128 (TEAK…LEKA), 1129-1148 (INAK…KTLL), 1150-1169 (TQPN…NPIQ), 1174-1193 (AEGL…VVED), 1199-1218 (VGTG…NVTS), 1219-1238 (VKDA…DVTK), 1646-1665 (TDAK…QLTN), 1667-1686 (TLSN…NEVS), 1690-1709 (RAGA…KLVK), 1711-1730 (TDPL…NLTK), 1732-1751 (ISPN…RVKS), 1753-1772 (SYNG…NETS), 1795-1814 (LTDR…DKLK), 1820-1839 (HGDQ…QMIE), 1840-1859 (MKDS…NVQT), 1861-1880 (ITGN…LVSS), 1887-1906 (NGGD…NRTT), 1908-1927 (NSSA…QLVK), and 1929-1948 (THED…NRKT). A 3 X 101 AA approximate tandem repeats region spans residues 504-869 (TGYFDISWKK…TLVAYDANGE (366 aa)). A 31 X 21 AA approximate tandem repeats of X(4)-G-X(4)-[YF]-X-D-X(2)-G-X(4) region spans residues 1021-2139 (VDGHNNATVY…QYDEETGLYY (1119 aa)). YD repeat units lie at residues 1032–1065 (YNDK…ITGP) and 1075–1103 (ENDL…LVKQ). The stretch at 1636–1671 (YDETGKKTSETDAKGEKTTYTYDQADQLTNMTLSNG) is one YD 3 repeat. The stretch at 1898–1935 (YDANGNRTTINSSASGKVQYEYGKLNQLVKETHEDGTV) is one YD 4 repeat. A 2-24; approximate repeat occupies 1969–1982 (QLTKVNDESISYDK). Repeat copies occupy residues 1983–2002 (NGNR…EDNL), 2008–2027 (KGED…NRIQ), 2028–2047 (KTVN…LNVL), 2051–2070 (DADN…QLLS), 2071–2090 (YTEN…DIIA), 2093–2112 (DSTG…NPTK), and 2120–2139 (KDNR…GLYY). The YD 5 repeat unit spans residues 2082–2113 (YNAHGDIIAISDSTGKTVAKYQYDAWGNPTKT). Positions 2312–2334 (SRAKGSKHVFHTHGKGNKSKRRR) are disordered. Positions 2315 to 2334 (KGSKHVFHTHGKGNKSKRRR) are enriched in basic residues.

This sequence belongs to the RHS/WapA nuclease family. In terms of processing, identified in the extracellular proteome as many processing products ranging from over 85 kDa to about 30 kDa. One of these probably starts on Ser-1726. Two forms are known as CWBP62 and CWBP105.

The protein localises to the secreted. It localises to the cell wall. With respect to regulation, detected in exponentially growing cells as many processing products, protein disappears upon entry into stationary phase with the concomitant appearance of smaller products. The large products persist in the absence of the extracellular serine protease Epr. Its function is as follows. Toxic component of a toxin-immunity protein module, which functions as a cellular contact-dependent growth inhibition (CDI) system. A site-specific general tRNA nuclease, the C-terminus (residues 2201-2334) removes 2 or 4 nucleotides from the 3' end of at least 4 tRNAs (upon expression in E.coli), possibly endonucleolytically. The nuclease activity is neutralized by expression of the cognate immunity protein WapI from the same strain, but not its homolog from 2 other B.subtilis strains. The C-terminus cannot be expressed on its own in E.coli, however it can be cloned in the presence of its cognate immunity protein gene. Cell contact is necessary for growth inhibition. Unlike the LXG toxin-immunity modules, WapAI mediates competition under shaking culture conditions. In Bacillus subtilis (strain 168), this protein is tRNA nuclease WapA (wapA).